The sequence spans 138 residues: ATP synthase epsilon chain (138 aa).

This sequence belongs to the ATPase epsilon chain family. In terms of assembly, F-type ATPases have 2 components, CF(1) - the catalytic core - and CF(0) - the membrane proton channel. CF(1) has five subunits: alpha(3), beta(3), gamma(1), delta(1), epsilon(1). CF(0) has three main subunits: a, b and c.

The protein localises to the cell inner membrane. Produces ATP from ADP in the presence of a proton gradient across the membrane. The chain is ATP synthase epsilon chain from Endomicrobium trichonymphae.